The chain runs to 922 residues: Protein translocase subunit SecA (922 aa).

Residues glutamine 87, 105–109 (GEGKT), and aspartate 519 each bind ATP. The disordered stretch occupies residues 850–891 (HASRQMRSIQGNAQHNSMGSFSGSGHGMGPTALSARSRPENA). Polar residues predominate over residues 854-865 (QMRSIQGNAQHN). Cysteine 906, cysteine 908, cysteine 917, and cysteine 918 together coordinate Zn(2+).

This sequence belongs to the SecA family. Monomer and homodimer. Part of the essential Sec protein translocation apparatus which comprises SecA, SecYEG and auxiliary proteins SecDF. Other proteins may also be involved. It depends on Zn(2+) as a cofactor.

The protein resides in the cell inner membrane. It localises to the cytoplasm. It carries out the reaction ATP + H2O + cellular proteinSide 1 = ADP + phosphate + cellular proteinSide 2.. In terms of biological role, part of the Sec protein translocase complex. Interacts with the SecYEG preprotein conducting channel. Has a central role in coupling the hydrolysis of ATP to the transfer of proteins into and across the cell membrane, serving as an ATP-driven molecular motor driving the stepwise translocation of polypeptide chains across the membrane. The sequence is that of Protein translocase subunit SecA from Treponema denticola (strain ATCC 35405 / DSM 14222 / CIP 103919 / JCM 8153 / KCTC 15104).